Consider the following 258-residue polypeptide: Proteasome subunit alpha (258 aa).

The protein belongs to the peptidase T1A family. In terms of assembly, the 20S proteasome core is composed of 14 alpha and 14 beta subunits that assemble into four stacked heptameric rings, resulting in a barrel-shaped structure. The two inner rings, each composed of seven catalytic beta subunits, are sandwiched by two outer rings, each composed of seven alpha subunits. The catalytic chamber with the active sites is on the inside of the barrel. Has a gated structure, the ends of the cylinder being occluded by the N-termini of the alpha-subunits. Is capped at one or both ends by the proteasome regulatory ATPase, PAN.

Its subcellular location is the cytoplasm. Its activity is regulated as follows. The formation of the proteasomal ATPase PAN-20S proteasome complex, via the docking of the C-termini of PAN into the intersubunit pockets in the alpha-rings, triggers opening of the gate for substrate entry. Interconversion between the open-gate and close-gate conformations leads to a dynamic regulation of the 20S proteasome proteolysis activity. Component of the proteasome core, a large protease complex with broad specificity involved in protein degradation. This Aeropyrum pernix (strain ATCC 700893 / DSM 11879 / JCM 9820 / NBRC 100138 / K1) protein is Proteasome subunit alpha.